The sequence spans 520 residues: Maturase K (520 aa).

This sequence belongs to the intron maturase 2 family. MatK subfamily.

It is found in the plastid. It localises to the chloroplast. In terms of biological role, usually encoded in the trnK tRNA gene intron. Probably assists in splicing its own and other chloroplast group II introns. In Galanthus elwesii (Giant snowdrop), this protein is Maturase K.